The chain runs to 430 residues: Adenylosuccinate synthetase (430 aa).

Residues 11–17 and 39–41 contribute to the GTP site; these read GDEGKGK and GHT. Asp-12 functions as the Proton acceptor in the catalytic mechanism. 2 residues coordinate Mg(2+): Asp-12 and Gly-39. Residues 12–15, 37–40, Thr-130, Arg-144, Asn-226, Thr-241, and Arg-305 each bind IMP; these read DEGK and NAGH. Residue His-40 is the Proton donor of the active site. 301-307 provides a ligand contact to substrate; the sequence is VTTGRKR. GTP contacts are provided by residues Arg-307, 333 to 335, and 415 to 417; these read KLD and GTG.

Belongs to the adenylosuccinate synthetase family. As to quaternary structure, homodimer. The cofactor is Mg(2+).

The protein localises to the cytoplasm. The catalysed reaction is IMP + L-aspartate + GTP = N(6)-(1,2-dicarboxyethyl)-AMP + GDP + phosphate + 2 H(+). It functions in the pathway purine metabolism; AMP biosynthesis via de novo pathway; AMP from IMP: step 1/2. In terms of biological role, plays an important role in the de novo pathway and in the salvage pathway of purine nucleotide biosynthesis. Catalyzes the first committed step in the biosynthesis of AMP from IMP. This is Adenylosuccinate synthetase from Scheffersomyces stipitis (strain ATCC 58785 / CBS 6054 / NBRC 10063 / NRRL Y-11545) (Yeast).